Here is an 814-residue protein sequence, read N- to C-terminus: Protein ADP-ribosyltransferase PARP3 (814 aa).

Basic and acidic residues-rich tracts occupy residues 1–19 and 27–48; these read MKVH…EQKG and EGKL…DDGR. Residues 1 to 52 form a disordered region; sequence MKVHETRSHAHMSGDEQKGNLRKHKAEGKLPESEQSQKKAKPENDDGRSVNG. Residues 38–186 enclose the PADR1 zinc-binding domain; it reads KKAKPENDDG…KRELGSADKP (149 aa). Positions 105-150 are zinc ribbon; it reads GALAKCPLCGGTLICDNEKRFVCGGEISEWCSCVFSTKDPPRKEEP. Cys110, Cys113, Cys127, and Cys137 together coordinate Zn(2+). TPR repeat units lie at residues 182-215 and 277-310; these read SADK…NGGK and DLSV…YGKR. In terms of domain architecture, BRCT spans 187–274; that stretch reads FVGMMISLMG…EAQPLEAYDV (88 aa). The WGR domain maps to 322-422; that stretch reads GGKIFEKDGL…KKIQKKPHKF (101 aa). The 120-residue stretch at 449–568 folds into the PARP alpha-helical domain; that stretch reads HCKLDSFVAN…DINTASRLIG (120 aa). Residues 577–808 form the PARP catalytic domain; it reads DPLSDRYKKL…VKYEEKGTEI (232 aa).

The protein belongs to the ARTD/PARP family.

Its subcellular location is the nucleus. It carries out the reaction L-aspartyl-[protein] + NAD(+) = 4-O-(ADP-D-ribosyl)-L-aspartyl-[protein] + nicotinamide. The catalysed reaction is L-glutamyl-[protein] + NAD(+) = 5-O-(ADP-D-ribosyl)-L-glutamyl-[protein] + nicotinamide. Functionally, involved in the base excision repair (BER) pathway, by catalyzing the poly(ADP-ribosyl)ation of a limited number of acceptor proteins involved in chromatin architecture and in DNA metabolism. This modification follows DNA damages and appears as an obligatory step in a detection/signaling pathway leading to the reparation of DNA strand breaks. This Arabidopsis thaliana (Mouse-ear cress) protein is Protein ADP-ribosyltransferase PARP3 (PARP3).